Here is a 274-residue protein sequence, read N- to C-terminus: Large ribosomal subunit protein uL2cz/uL2cy (274 aa).

Disordered regions lie at residues 1 to 23 (MAIH…SQVK) and 224 to 274 (NPVD…RRSK).

The protein belongs to the universal ribosomal protein uL2 family. Part of the 50S ribosomal subunit.

The protein resides in the plastid. It localises to the chloroplast. This is Large ribosomal subunit protein uL2cz/uL2cy (rpl2-A) from Vitis vinifera (Grape).